The sequence spans 197 residues: MHYFSEKPTTKSDVKIVEDILRGKKLKFKTDSGVFSYGKVDKGTKILVENVVVDKDDDILDLGCGYGVIGIALADEVKSTTMADINRRAIKLAKENIKLNNLDNYDIRVVHSDLYENVKDRKYNKIITNPPIRAGKEVLHRIIEEGKELLKDNGEIWVVIQTKQGAKSLAKYMKDVFGNVETVTIKGGYRVLKSKKL.

Residues 63-67 (GCGYG), aspartate 84, and asparagine 129 contribute to the S-adenosyl-L-methionine site. Position 129–132 (129–132 (NPPI)) interacts with substrate.

This sequence belongs to the methyltransferase superfamily.

Probable methyltransferase that uses S-adenosylmethionine as the methyl donor. Binds neither NAD nor NADP in vitro. In Methanocaldococcus jannaschii (strain ATCC 43067 / DSM 2661 / JAL-1 / JCM 10045 / NBRC 100440) (Methanococcus jannaschii), this protein is Probable S-adenosylmethionine-dependent methyltransferase MJ0882.